A 494-amino-acid polypeptide reads, in one-letter code: Keratin, type I cytoskeletal 12 (494 aa).

The segment covering 1 to 12 (MDLSNNTMSLSV) has biased composition (polar residues). The interval 1-32 (MDLSNNTMSLSVRTPGLSRRLSSQSVIGRPRG) is disordered. Residues 1–124 (MDLSNNTMSL…GNDGGLLSGS (124 aa)) are head. The coil 1A stretch occupies residues 125-160 (EKETMQNLNDRLASYLDKVRALEEANTELENKIREW). One can recognise an IF rod domain in the interval 125-440 (EKETMQNLND…RLLDGEAQGD (316 aa)). The tract at residues 164-182 (RGTGTADASQSDYSKYYPL) is linker 1. A coil 1B region spans residues 183 to 274 (IEDLRNKIIS…KNHEDELQSF (92 aa)). Residues 275–297 (RVGGPGEVSVEMDAAPGVDLTRL) form a linker 12 region. Residues 298–435 (LNDMRAQYET…IETYRRLLDG (138 aa)) are coil 2. Residues 436–494 (EAQGDGLEESLFVTDSKSQAQSTDSSKDPTKTRKIKTVVQEMVNGEVVSSQVQEIEELM) are tail. Residues 446–468 (LFVTDSKSQAQSTDSSKDPTKTR) are disordered. The span at 448–459 (VTDSKSQAQSTD) shows a compositional bias: polar residues.

This sequence belongs to the intermediate filament family. As to quaternary structure, heterotetramer of two type I and two type II keratins. Keratin-3 associates with keratin-12. In terms of tissue distribution, expressed in the corneal epithelium (at protein level).

Its function is as follows. Involved in corneal epithelium organization, integrity and corneal keratin expression. The polypeptide is Keratin, type I cytoskeletal 12 (KRT12) (Homo sapiens (Human)).